The chain runs to 230 residues: UPF0702 transmembrane protein YcaP (230 aa).

A run of 3 helical transmembrane segments spans residues 16-36 (FDFL…VFLF), 48-68 (MSLF…DVAF), and 75-95 (VPVL…MWLM).

Belongs to the UPF0702 family.

The protein localises to the cell membrane. This chain is UPF0702 transmembrane protein YcaP (ycaP), found in Escherichia coli (strain K12).